Consider the following 182-residue polypeptide: UPF0397 protein BA_2640/GBAA_2640/BAS2460 (182 aa).

5 helical membrane-spanning segments follow: residues 9–29 (VVAIGIGSALYGILGLWGFSI), 40–60 (AILTVFGALFGPVAGLLIGLI), 71–91 (WSIWWGWVISSGIIGFTMGFI), 114–134 (ITGLIGIVIAIIFAGAFDIIV), and 142–162 (IVIQVLGATIADVIVFLVLGL).

The protein belongs to the UPF0397 family.

It is found in the cell membrane. This chain is UPF0397 protein BA_2640/GBAA_2640/BAS2460, found in Bacillus anthracis.